We begin with the raw amino-acid sequence, 406 residues long: Serine/threonine transporter SstT (406 aa).

9 helical membrane-spanning segments follow: residues 15 to 35, 47 to 67, 81 to 101, 140 to 160, 191 to 211, 215 to 235, 289 to 309, 315 to 335, and 362 to 382; these read LVIQILVGIILGISLALVSPS, FVGALKAIAPILVFILVAASI, IIVMYLAGTFFAALTAVVLSF, ALMSANYIGILAWGVGLGLAL, FGIFGLVASTFATTGFDALAG, LLVVLLSAMAIIALIVNPAMV, IPLGATINMAGAAITITTLTL, MGIEVDLMTALLLSVVAAVSA, and IAMQVVAVGFIIGVIQDSAET.

It belongs to the dicarboxylate/amino acid:cation symporter (DAACS) (TC 2.A.23) family.

It localises to the cell inner membrane. The enzyme catalyses L-serine(in) + Na(+)(in) = L-serine(out) + Na(+)(out). It carries out the reaction L-threonine(in) + Na(+)(in) = L-threonine(out) + Na(+)(out). Its function is as follows. Involved in the import of serine and threonine into the cell, with the concomitant import of sodium (symport system). This chain is Serine/threonine transporter SstT, found in Vibrio vulnificus (strain YJ016).